The chain runs to 461 residues: Pup--protein ligase (461 aa).

Residue Glu-9 participates in Mg(2+) binding. ATP is bound at residue Arg-53. Tyr-55 is a Mg(2+) binding site. Asp-57 acts as the Proton acceptor in catalysis. Mg(2+) is bound at residue Glu-63. Positions 66 and 420 each coordinate ATP.

Belongs to the Pup ligase/Pup deamidase family. Pup-conjugating enzyme subfamily.

It carries out the reaction ATP + [prokaryotic ubiquitin-like protein]-L-glutamate + [protein]-L-lysine = ADP + phosphate + N(6)-([prokaryotic ubiquitin-like protein]-gamma-L-glutamyl)-[protein]-L-lysine.. It participates in protein degradation; proteasomal Pup-dependent pathway. It functions in the pathway protein modification; protein pupylation. Functionally, catalyzes the covalent attachment of the prokaryotic ubiquitin-like protein modifier Pup to the proteasomal substrate proteins, thereby targeting them for proteasomal degradation. This tagging system is termed pupylation. The ligation reaction involves the side-chain carboxylate of the C-terminal glutamate of Pup and the side-chain amino group of a substrate lysine. This is Pup--protein ligase from Renibacterium salmoninarum (strain ATCC 33209 / DSM 20767 / JCM 11484 / NBRC 15589 / NCIMB 2235).